We begin with the raw amino-acid sequence, 227 residues long: Small ribosomal subunit protein uS5 (227 aa).

The segment at 1-22 (MSKRSNRSNNKNNTNKFNIENW) is disordered. Residues 7-18 (RSNNKNNTNKFN) show a composition bias toward low complexity. Residues 63–126 (LEEEVMDVNL…DAAKYNLIKV (64 aa)) enclose the S5 DRBM domain.

It belongs to the universal ribosomal protein uS5 family. As to quaternary structure, part of the 30S ribosomal subunit. Contacts protein S4.

Its function is as follows. With S4 and S12 plays an important role in translational accuracy. The polypeptide is Small ribosomal subunit protein uS5 (Methanosphaera stadtmanae (strain ATCC 43021 / DSM 3091 / JCM 11832 / MCB-3)).